The chain runs to 152 residues: Protein FYV5 (152 aa).

5 helical membrane-spanning segments follow: residues I26 to S46, L56 to L76, V82 to L102, L106 to F126, and F127 to I147.

The protein localises to the cell membrane. The protein resides in the secreted. It is found in the cell wall. Involved in maintaining an adequate ionic strength homeostasis of the cellular aqueous environment, necessary for normal growth rate. Required for survival upon exposure to K1 killer toxin and hence plays a role in cell wall glucan synthesis. Required for dithiothreitol (DTT) resistance. Involved in cell cycle progression. The chain is Protein FYV5 (FYV5) from Saccharomyces cerevisiae (strain ATCC 204508 / S288c) (Baker's yeast).